The following is a 362-amino-acid chain: MERIVVTLGERSYPITIASGLFNEPASFLPLKSGEQVMLVTNETLAPLYLDKVRGVLEQAGVNVDSVILPDGEQYKSLAVLDTVFTALLQKPHGRDTTLVALGGGVVGDLTGFAAASYQRGVRFIQVPTTLLSQVDSSVGGKTAVNHPLGKNMIGAFYQPASVVVDLDCLKTLPPRELASGLAEVIKYGIILDGTFFNWLEENLDALLRLDGPAMAYCIRRCCELKAEVVAADERETGLRALLNLGHTFGHAIEAEMGYGNWLHGEAVAAGMVMAARTSERLGQFSSAETQRIITLLTRAGLPVNGPREMSAQAYLPHMLRDKKVLAGEMRLILPLAIGKSEVRSGVSHELVLNAIADCQSA.

Residues 71-76, 105-109, 129-130, lysine 142, lysine 151, and 169-172 each bind NAD(+); these read DGEQYK, GVVGD, TT, and CLKT. Zn(2+)-binding residues include glutamate 184, histidine 247, and histidine 264.

The protein belongs to the sugar phosphate cyclases superfamily. Dehydroquinate synthase family. The cofactor is NAD(+). Requires Co(2+) as cofactor. It depends on Zn(2+) as a cofactor.

Its subcellular location is the cytoplasm. It catalyses the reaction 7-phospho-2-dehydro-3-deoxy-D-arabino-heptonate = 3-dehydroquinate + phosphate. Its pathway is metabolic intermediate biosynthesis; chorismate biosynthesis; chorismate from D-erythrose 4-phosphate and phosphoenolpyruvate: step 2/7. Catalyzes the conversion of 3-deoxy-D-arabino-heptulosonate 7-phosphate (DAHP) to dehydroquinate (DHQ). The sequence is that of 3-dehydroquinate synthase from Escherichia coli O157:H7.